The primary structure comprises 478 residues: Cysteine--tRNA ligase (478 aa).

Cysteine 27 is a binding site for Zn(2+). The short motif at 29–39 is the 'HIGH' region element; sequence PTTYNFIHLGN. Residues cysteine 207, histidine 232, and glutamate 236 each contribute to the Zn(2+) site. The 'KMSKS' region motif lies at 264–268; sequence KMSKS. Lysine 267 is an ATP binding site.

Belongs to the class-I aminoacyl-tRNA synthetase family. In terms of assembly, monomer. It depends on Zn(2+) as a cofactor.

Its subcellular location is the cytoplasm. It catalyses the reaction tRNA(Cys) + L-cysteine + ATP = L-cysteinyl-tRNA(Cys) + AMP + diphosphate. The chain is Cysteine--tRNA ligase from Desulforudis audaxviator (strain MP104C).